The sequence spans 579 residues: 2-isopropylmalate synthase (579 aa).

The Pyruvate carboxyltransferase domain maps to 40 to 314 (PRWCAVDLRD…DPMIDFSDID (275 aa)). Mg(2+)-binding residues include aspartate 49, histidine 253, histidine 255, and asparagine 289. Residues 456–579 (SSKEDGQWGR…VNRAIRDAQA (124 aa)) are regulatory domain.

Belongs to the alpha-IPM synthase/homocitrate synthase family. LeuA type 2 subfamily. In terms of assembly, homodimer. It depends on Mg(2+) as a cofactor.

It is found in the cytoplasm. The catalysed reaction is 3-methyl-2-oxobutanoate + acetyl-CoA + H2O = (2S)-2-isopropylmalate + CoA + H(+). It functions in the pathway amino-acid biosynthesis; L-leucine biosynthesis; L-leucine from 3-methyl-2-oxobutanoate: step 1/4. Functionally, catalyzes the condensation of the acetyl group of acetyl-CoA with 3-methyl-2-oxobutanoate (2-ketoisovalerate) to form 3-carboxy-3-hydroxy-4-methylpentanoate (2-isopropylmalate). The polypeptide is 2-isopropylmalate synthase (Arthrobacter sp. (strain FB24)).